The chain runs to 257 residues: MLIVVSPAKTLDYESPLVTSRFTQPELLDHSAELIGRARQLSPDQIASLMKISDKLAGLNAARFADWQPDFSPANARQALLAFKGDVYTGLAVEDFSEADLDFAQAHLRMLSGLYGVLRPLDLMMPYRLEMGIRLDNGRGKDLYQFWGDIITAHLNKALAAQGDEVLINLASDEYFKSVRPKALQGRIITPVFKDEKNGQFKIISFYAKKARGMMARHIIKHRLTKVEQLTGFNADGYYFVAEESDANTLMFKRAEN.

It belongs to the UPF0246 family.

This is UPF0246 protein AHA_3667 from Aeromonas hydrophila subsp. hydrophila (strain ATCC 7966 / DSM 30187 / BCRC 13018 / CCUG 14551 / JCM 1027 / KCTC 2358 / NCIMB 9240 / NCTC 8049).